The following is a 142-amino-acid chain: Small ribosomal subunit protein uS9 (142 aa).

It belongs to the universal ribosomal protein uS9 family.

It is found in the cytoplasm. This chain is Small ribosomal subunit protein uS9 (RPS16), found in Syntrichia ruralis (Great hairy screw-moss).